Consider the following 303-residue polypeptide: 4-sulfomuconolactone hydrolase (303 aa).

Belongs to the metallo-dependent hydrolases superfamily. Sulfomuconolactone hydrolase family. Monomer. It depends on Zn(2+) as a cofactor.

The catalysed reaction is 4-sulfomuconolactone + H2O = maleylacetate + sulfite + 2 H(+). Completely inhibited by ZnCl(2) and CuCl(2). Functionally, involved in the degradation of 4-sulfocatechol which is a central intermediate in the degradation of substituted sulfonated benzenes. Catalyzes the hydrolytical desulfonation of 4-sulfomuconolactone to yield maleylacetate. This chain is 4-sulfomuconolactone hydrolase, found in Hydrogenophaga intermedia.